The sequence spans 82 residues: MAAGSTGERPFFEIITSIRYWVIHFVTLPSIFLAGFLFVSTGLAYDAFGTPRPDAYFQASESKAPVVSQRYEGKSELDVRLK.

A helical membrane pass occupies residues 22–36 (VIHFVTLPSIFLAGF). His-24 contributes to the heme binding site.

It belongs to the PsbE/PsbF family. Heterodimer of an alpha subunit and a beta subunit. PSII is composed of 1 copy each of membrane proteins PsbA, PsbB, PsbC, PsbD, PsbE, PsbF, PsbH, PsbI, PsbJ, PsbK, PsbL, PsbM, PsbT, PsbX, PsbY, PsbZ, Psb30/Ycf12, peripheral proteins PsbO, CyanoQ (PsbQ), PsbU, PsbV and a large number of cofactors. It forms dimeric complexes. Requires heme b as cofactor.

It localises to the cellular thylakoid membrane. This b-type cytochrome is tightly associated with the reaction center of photosystem II (PSII). PSII is a light-driven water:plastoquinone oxidoreductase that uses light energy to abstract electrons from H(2)O, generating O(2) and a proton gradient subsequently used for ATP formation. It consists of a core antenna complex that captures photons, and an electron transfer chain that converts photonic excitation into a charge separation. The sequence is that of Cytochrome b559 subunit alpha from Parasynechococcus marenigrum (strain WH8102).